A 90-amino-acid chain; its full sequence is uncharacterized protein (90 aa).

Residue Lys-88 forms an Isoglutamyl lysine isopeptide (Lys-Gln) (interchain with Q-Cter in protein Pup) linkage.

This is an uncharacterized protein from Mycolicibacterium smegmatis (strain ATCC 700084 / mc(2)155) (Mycobacterium smegmatis).